Here is an 83-residue protein sequence, read N- to C-terminus: Alpha-neurotoxin NTX-3 (83 aa).

The N-terminal stretch at 1 to 21 is a signal peptide; sequence MKTLLLTLLVVTIVCLDLGYT. 4 disulfides stabilise this stretch: cysteine 24–cysteine 45, cysteine 38–cysteine 62, cysteine 64–cysteine 75, and cysteine 76–cysteine 81.

It belongs to the three-finger toxin family. Short-chain subfamily. Type I alpha-neurotoxin sub-subfamily. Expressed by the venom gland.

It localises to the secreted. Its function is as follows. Binds to muscle nicotinic acetylcholine receptor (nAChR) and inhibit acetylcholine from binding to the receptor, thereby impairing neuromuscular transmission. The sequence is that of Alpha-neurotoxin NTX-3 from Naja sputatrix (Malayan spitting cobra).